The chain runs to 232 residues: Sugar fermentation stimulation protein homolog (232 aa).

This sequence belongs to the SfsA family.

The sequence is that of Sugar fermentation stimulation protein homolog from Acidithiobacillus ferrooxidans (strain ATCC 23270 / DSM 14882 / CIP 104768 / NCIMB 8455) (Ferrobacillus ferrooxidans (strain ATCC 23270)).